The sequence spans 173 residues: 3-hydroxydecanoyl-[acyl-carrier-protein] dehydratase (173 aa).

Residue His71 is part of the active site.

This sequence belongs to the thioester dehydratase family. FabA subfamily. Homodimer.

It localises to the cytoplasm. It carries out the reaction a (3R)-hydroxyacyl-[ACP] = a (2E)-enoyl-[ACP] + H2O. The catalysed reaction is (3R)-hydroxydecanoyl-[ACP] = (2E)-decenoyl-[ACP] + H2O. The enzyme catalyses (2E)-decenoyl-[ACP] = (3Z)-decenoyl-[ACP]. The protein operates within lipid metabolism; fatty acid biosynthesis. Necessary for the introduction of cis unsaturation into fatty acids. Catalyzes the dehydration of (3R)-3-hydroxydecanoyl-ACP to E-(2)-decenoyl-ACP and then its isomerization to Z-(3)-decenoyl-ACP. Can catalyze the dehydratase reaction for beta-hydroxyacyl-ACPs with saturated chain lengths up to 16:0, being most active on intermediate chain length. The protein is 3-hydroxydecanoyl-[acyl-carrier-protein] dehydratase of Bradyrhizobium sp. (strain BTAi1 / ATCC BAA-1182).